Consider the following 238-residue polypeptide: Synapse differentiation-inducing gene protein 1-like (238 aa).

3 disordered regions span residues 1-24 (MESL…GPYP), 78-111 (KVKE…PGQA), and 126-155 (EEFQ…NFLT). Residues 1–162 (MESLSELQNP…FLTLPPRDHL (162 aa)) lie on the Extracellular side of the membrane. Residues 133–151 (GDPEEEESDATSTESESED) show a composition bias toward acidic residues. A helical transmembrane segment spans residues 163–183 (GLTIFSMLCCFWPLGIAAFYF). Residues 184 to 205 (SQGTSKAISKGDFRLANTTSRR) lie on the Cytoplasmic side of the membrane. The helical transmembrane segment at 206–226 (ALFLATLSIAVGAGLYVAVVV) threads the bilayer. Residues 227-238 (ALAAYMSQNGHS) are Extracellular-facing.

It belongs to the CD225/Dispanin family.

It localises to the membrane. Its subcellular location is the golgi apparatus. It is found in the cis-Golgi network. The chain is Synapse differentiation-inducing gene protein 1-like (SYNDIG1L) from Bos taurus (Bovine).